Here is a 341-residue protein sequence, read N- to C-terminus: Adenosine deaminase (341 aa).

Positions 15 and 17 each coordinate Zn(2+). Residues histidine 17, aspartate 19, and glycine 172 each contribute to the substrate site. Histidine 199 is a Zn(2+) binding site. Catalysis depends on glutamate 202, which acts as the Proton donor. Aspartate 279 is a binding site for Zn(2+).

The protein belongs to the metallo-dependent hydrolases superfamily. Adenosine and AMP deaminases family. Adenosine deaminase subfamily. Zn(2+) is required as a cofactor.

It carries out the reaction adenosine + H2O + H(+) = inosine + NH4(+). The enzyme catalyses 2'-deoxyadenosine + H2O + H(+) = 2'-deoxyinosine + NH4(+). Catalyzes the hydrolytic deamination of adenosine and 2-deoxyadenosine. This is Adenosine deaminase from Streptococcus equi subsp. zooepidemicus (strain MGCS10565).